A 787-amino-acid chain; its full sequence is Aconitate hydratase, mitochondrial (787 aa).

The N-terminal 33 residues, 1 to 33 (MISTRLARAGALAPKSRLFLGTRAFATVGDSPL), are a transit peptide targeting the mitochondrion. Substrate-binding positions include Gln104 and 197–199 (DSH). [4Fe-4S] cluster-binding residues include Cys390, Cys453, and Cys456. 2 residues coordinate substrate: Arg479 and Arg484. Residues 529–559 (LQPPTGEGLPAKGYDPGRDTYQAPPADRSSV) form a disordered region. Residues Arg612 and 675–676 (SR) each bind substrate.

It belongs to the aconitase/IPM isomerase family. [4Fe-4S] cluster serves as cofactor.

It is found in the mitochondrion. The catalysed reaction is citrate = D-threo-isocitrate. The enzyme catalyses (2R)-homocitrate = cis-homoaconitate + H2O. Its pathway is carbohydrate metabolism; tricarboxylic acid cycle; isocitrate from oxaloacetate: step 2/2. The protein operates within amino-acid biosynthesis; L-lysine biosynthesis via AAA pathway; L-alpha-aminoadipate from 2-oxoglutarate: step 2/5. Its function is as follows. Catalyzes the isomerization of citrate to isocitrate via cis-aconitate, a step in the citric acid cycle. Also catalyzes the reversible dehydration of (R)-homocitrate to cis-homoaconitate, a step in the alpha-aminoadipate pathway for lysine biosynthesis. This is Aconitate hydratase, mitochondrial (acoA) from Aspergillus fumigatus (strain ATCC MYA-4609 / CBS 101355 / FGSC A1100 / Af293) (Neosartorya fumigata).